The sequence spans 54 residues: Preprotein translocase subunit SecG (54 aa).

Over 1–31 the chain is Cytoplasmic; it reads MSSGSNSGGLMSSAGLVRYFDSEDRDAIAID. Residues 32-53 traverse the membrane as a helical segment; that stretch reads PKTVLAFCVLFGVFVQILSLTV. A topological domain (extracellular) is located at residue A54.

This sequence belongs to the SEC61-beta family. As to quaternary structure, component of the protein translocase complex. Heterotrimer consisting of alpha (SecY), beta (SecG) and gamma (SecE) subunits. Can form oligomers of the heterotrimer.

The protein localises to the cell membrane. Functionally, involved in protein export. The function of the beta subunit is unknown, but it may be involved in stabilization of the trimeric complex. This Halorubrum lacusprofundi (strain ATCC 49239 / DSM 5036 / JCM 8891 / ACAM 34) protein is Preprotein translocase subunit SecG.